The chain runs to 242 residues: Coat protein (242 aa).

Positions 1–16 (MGDQPRPPVPPAPGSN) are enriched in pro residues. Disordered stretches follow at residues 1 to 41 (MGDQ…VANQ) and 219 to 242 (SNST…GPDA). Polar residues predominate over residues 219–232 (SNSTLLTKGASRST).

The protein belongs to the potexvirus capsid protein family.

It localises to the virion. Functionally, required for genome encapsidation. Forms ribonucleoprotein complexes along with TGB1 helicase and viral RNA. The polypeptide is Coat protein (Strawberry mild yellow edge-associated virus (SMYEaV)).